We begin with the raw amino-acid sequence, 185 residues long: UPF0669 protein C6orf120 homolog (185 aa).

The first 23 residues, 1–23, serve as a signal peptide directing secretion; that stretch reads MAARWRRILIVFVAAQVLCLVNT. N-linked (GlcNAc...) asparagine glycosylation is present at N47.

The protein belongs to the UPF0669 family.

It is found in the secreted. This chain is UPF0669 protein C6orf120 homolog, found in Gallus gallus (Chicken).